A 1011-amino-acid chain; its full sequence is Cell division cycle-associated protein 2 (1011 aa).

Polar residues predominate over residues 1–22; the sequence is MDTCSQESEPLQTKESPINNAG. The segment at 1–26 is disordered; the sequence is MDTCSQESEPLQTKESPINNAGKTPL. S125, S130, S209, S293, and S310 each carry phosphoserine. T313 is subject to Phosphothreonine. The region spanning 380 to 440 is the PP1-binding domain; it reads KRKRVTFGED…PEWLPQPNFD (61 aa). Residues S391 and S398 each carry the phosphoserine modification. Disordered stretches follow at residues 395 to 438 and 522 to 544; these read LDES…PQPN and PCKE…KVLP. Phosphothreonine is present on T403. Positions 418–431 are enriched in low complexity; that stretch reads SSLSPPLLEQSPVP. The residue at position 428 (S428) is a Phosphoserine. The span at 522–543 shows a compositional bias: basic and acidic residues; it reads PCKEKKTNRRKSQESKHADKVL. A phosphoserine mark is found at S583, S702, and S747. K753 is covalently cross-linked (Glycyl lysine isopeptide (Lys-Gly) (interchain with G-Cter in SUMO2)). The segment covering 790–803 has biased composition (basic and acidic residues); it reads DQRKVSKSQGEDLG. Disordered regions lie at residues 790 to 835 and 896 to 1011; these read DQRK…GLHL and GLVW…LSEN. Residues 931–945 show a composition bias toward polar residues; sequence SSRQDPCTLPSTSSE. S967 carries the phosphoserine modification. The segment covering 968–983 has biased composition (polar residues); it reads FCTSTLANPKSTTQSR. Residues 993–1011 are compositionally biased toward basic and acidic residues; the sequence is QKRENTLQETSRESDLSEN.

In terms of assembly, interacts with PPP1CC. Phosphorylated by CDK1. May regulate its subcellular location.

It is found in the nucleus. Regulator of chromosome structure during mitosis required for condensin-depleted chromosomes to retain their compact architecture through anaphase. Acts by mediating the recruitment of phopsphatase PP1-gamma subunit (PPP1CC) to chromatin at anaphase and into the following interphase. At anaphase onset, its association with chromatin targets a pool of PPP1CC to dephosphorylate substrates. In Bos taurus (Bovine), this protein is Cell division cycle-associated protein 2 (CDCA2).